A 216-amino-acid chain; its full sequence is Ras-like protein (216 aa).

16–23 is a GTP binding site; sequence GGGGVGKS. Residues 38-46 carry the Effector region motif; it reads YDPTIEDSY. Residues 63 to 67 and 122 to 125 each bind GTP; these read DTAGQ and NKCD. 2 S-palmitoyl cysteine lipidation sites follow: C209 and C210. C213 is subject to Cysteine methyl ester. C213 is lipidated: S-geranylgeranyl cysteine. A propeptide spans 214–216 (removed in mature form); it reads VVL.

It belongs to the small GTPase superfamily. Ras family.

The protein localises to the cell membrane. It carries out the reaction GTP + H2O = GDP + phosphate + H(+). Its activity is regulated as follows. Alternates between an inactive form bound to GDP and an active form bound to GTP. Activated by a guanine nucleotide-exchange factor (GEF) and inactivated by a GTPase-activating protein (GAP). The chain is Ras-like protein (RAS1) from Cryptococcus neoformans var. neoformans serotype D (strain B-3501A) (Filobasidiella neoformans).